The primary structure comprises 208 residues: Heavy metal-associated isoprenylated plant protein 42 (208 aa).

One can recognise an HMA domain in the interval 6–70 (FPICILKMNL…AVAKLGQSPQ (65 aa)). The disordered stretch occupies residues 93 to 116 (ATNKTQDKPSPPAPPVTATTPVET). Position 205 is a cysteine methyl ester (cysteine 205). Cysteine 205 is lipidated: S-farnesyl cysteine. A propeptide spans 206–208 (SIM) (removed in mature form).

It belongs to the HIPP family.

Functionally, probable heavy-metal-binding protein. The protein is Heavy metal-associated isoprenylated plant protein 42 of Arabidopsis thaliana (Mouse-ear cress).